A 289-amino-acid chain; its full sequence is 1D-myo-inositol 2-acetamido-2-deoxy-alpha-D-glucopyranoside deacetylase 1 (289 aa).

Positions 4, 7, and 140 each coordinate Zn(2+).

This sequence belongs to the MshB deacetylase family. Zn(2+) is required as a cofactor.

The catalysed reaction is 1D-myo-inositol 2-acetamido-2-deoxy-alpha-D-glucopyranoside + H2O = 1D-myo-inositol 2-amino-2-deoxy-alpha-D-glucopyranoside + acetate. Its function is as follows. Catalyzes the deacetylation of 1D-myo-inositol 2-acetamido-2-deoxy-alpha-D-glucopyranoside (GlcNAc-Ins) in the mycothiol biosynthesis pathway. In Frankia alni (strain DSM 45986 / CECT 9034 / ACN14a), this protein is 1D-myo-inositol 2-acetamido-2-deoxy-alpha-D-glucopyranoside deacetylase 1.